Consider the following 504-residue polypeptide: Anaerobic nitric oxide reductase transcription regulator NorR (504 aa).

The residue at position 57 (D57) is a 4-aspartylphosphate. A Sigma-54 factor interaction domain is found at 187–416; the sequence is MIGLSPGMTQ…LEHAIHRAVV (230 aa). ATP is bound by residues 215 to 222 and 278 to 287; these read GETGTGKE and ADNGTLFLDE. Residues 479–498 constitute a DNA-binding region (H-T-H motif); it reads WAACARMLETDVANLHRLAK.

Its pathway is nitrogen metabolism; nitric oxide reduction. In terms of biological role, required for the expression of anaerobic nitric oxide (NO) reductase, acts as a transcriptional activator for at least the norVW operon. Activation also requires sigma-54. The chain is Anaerobic nitric oxide reductase transcription regulator NorR from Escherichia coli O6:H1 (strain CFT073 / ATCC 700928 / UPEC).